A 374-amino-acid chain; its full sequence is Pectate lyase 2 (374 aa).

The N-terminal stretch at 1 to 22 (MKYLLPTAAAGLLLLAAQPAMA) is a signal peptide. C93 and C176 form a disulfide bridge. The Ca(2+) site is built by D150, D152, E187, and D191. R239 is a catalytic residue. The cysteines at positions 350 and 373 are disulfide-linked.

This sequence belongs to the polysaccharide lyase 1 family. PLADES subfamily. Ca(2+) serves as cofactor.

It localises to the secreted. It carries out the reaction Eliminative cleavage of (1-&gt;4)-alpha-D-galacturonan to give oligosaccharides with 4-deoxy-alpha-D-galact-4-enuronosyl groups at their non-reducing ends.. It functions in the pathway glycan metabolism; pectin degradation; 2-dehydro-3-deoxy-D-gluconate from pectin: step 2/5. Functionally, involved in maceration and soft-rotting of plant tissue. The polypeptide is Pectate lyase 2 (pel2) (Pectobacterium carotovorum (Erwinia carotovora)).